The sequence spans 802 residues: Phenylalanine--tRNA ligase beta subunit (802 aa).

The tRNA-binding domain occupies 38 to 149 (KSSLKPFVIA…ADAPVGTSFA (112 aa)). The B5 domain maps to 399 to 474 (HKPKIVSFPI…RIHGVDNIAP (76 aa)). Aspartate 452, aspartate 458, glutamate 461, and glutamate 462 together coordinate Mg(2+). Residues 708 to 801 (SAFQAVKRDF…VGKQTGGVLR (94 aa)) form the FDX-ACB domain.

Belongs to the phenylalanyl-tRNA synthetase beta subunit family. Type 1 subfamily. As to quaternary structure, tetramer of two alpha and two beta subunits. Mg(2+) serves as cofactor.

It is found in the cytoplasm. It carries out the reaction tRNA(Phe) + L-phenylalanine + ATP = L-phenylalanyl-tRNA(Phe) + AMP + diphosphate + H(+). This is Phenylalanine--tRNA ligase beta subunit from Mesorhizobium japonicum (strain LMG 29417 / CECT 9101 / MAFF 303099) (Mesorhizobium loti (strain MAFF 303099)).